A 993-amino-acid polypeptide reads, in one-letter code: Vinculin (993 aa).

Tandem repeats lie at residues 258 to 364 (DSDN…TKEI) and 373 to 480 (TNTQ…ELVD). Residues 258 to 480 (DSDNVTVMRK…LRNKLRELVD (223 aa)) are 2 X repeats. A disordered region spans residues 730–797 (ITGAGGSRPP…PPPETDDEEE (68 aa)). Over residues 758–768 (VHDRIYIREDI) the composition is skewed to basic and acidic residues. Residues 769–790 (PTPPRPPPPVEISPPPRPPPPP) show a composition bias toward pro residues.

The protein belongs to the vinculin/alpha-catenin family. Exhibits self-association properties.

It is found in the cytoplasm. It localises to the cytoskeleton. Its subcellular location is the cell junction. The protein resides in the adherens junction. The protein localises to the cell membrane. Its function is as follows. Involved in cell adhesion. May be involved in the attachment of the actin-based microfilaments to the plasma membrane. This is Vinculin from Brugia malayi (Filarial nematode worm).